The following is a 76-amino-acid chain: uncharacterized protein (76 aa).

This is an uncharacterized protein from Human cytomegalovirus (strain AD169) (HHV-5).